The sequence spans 128 residues: Fluoride-specific ion channel FluC (128 aa).

4 helical membrane passes run 3–23, 34–54, 69–89, and 100–120; these read FSVI…RFLI, LFPV…GFLY, FITG…ETLL, and FLNI…AIIL. Na(+)-binding residues include G75 and T78.

Belongs to the fluoride channel Fluc/FEX (TC 1.A.43) family.

The protein localises to the cell inner membrane. The enzyme catalyses fluoride(in) = fluoride(out). Na(+) is not transported, but it plays an essential structural role and its presence is essential for fluoride channel function. Its function is as follows. Fluoride-specific ion channel. Important for reducing fluoride concentration in the cell, thus reducing its toxicity. The chain is Fluoride-specific ion channel FluC from Nitratiruptor sp. (strain SB155-2).